Here is a 683-residue protein sequence, read N- to C-terminus: Methionine--tRNA ligase (683 aa).

The 'HIGH' region motif lies at 15–25 (PYANGPIHLGH). Zn(2+) contacts are provided by Cys-146, Cys-149, Cys-159, and Cys-162. The 'KMSKS' region signature appears at 332–336 (KMSKS). Lys-335 is an ATP binding site. One can recognise a tRNA-binding domain in the interval 581–683 (DFFKVDLRVA…AGAKAGQRVK (103 aa)).

Belongs to the class-I aminoacyl-tRNA synthetase family. MetG type 1 subfamily. In terms of assembly, homodimer. Zn(2+) is required as a cofactor.

Its subcellular location is the cytoplasm. It carries out the reaction tRNA(Met) + L-methionine + ATP = L-methionyl-tRNA(Met) + AMP + diphosphate. Its function is as follows. Is required not only for elongation of protein synthesis but also for the initiation of all mRNA translation through initiator tRNA(fMet) aminoacylation. This is Methionine--tRNA ligase from Histophilus somni (strain 129Pt) (Haemophilus somnus).